A 914-amino-acid polypeptide reads, in one-letter code: Calcium-activated chloride channel regulator 1 (914 aa).

Positions 1–21 (MGPFKSSVFILILHLLEGALS) are cleaved as a signal peptide. The metalloprotease domain stretch occupies residues 46–199 (DETLIQQIKD…GITGTNVVKK (154 aa)). Zn(2+) is bound at residue histidine 156. Glutamate 157 is a catalytic residue. Histidine 160 and aspartate 167 together coordinate Zn(2+). The VWFA domain maps to 306-475 (IVCLVLDKSG…NGLIDAFGAL (170 aa)). 8 N-linked (GlcNAc...) asparagine glycosylation sites follow: asparagine 503, asparagine 585, asparagine 770, asparagine 804, asparagine 810, asparagine 831, asparagine 836, and asparagine 890.

Belongs to the CLCR family. Glycosylated. In terms of processing, the 125-kDa product is autoproteolytically processed by the metalloprotease domain and yields to two cell-surface-associated subunits, a 90-kDa protein and a group of 37- to 41-kDa proteins. The cleavage is necessary for calcium-activated chloride channel (CaCC) activation activity. As to expression, highly expressed in small intestine and colon namely in intestinal basal crypt epithelia and goblet cells, and appendix. Weakly expressed in uterus, testis and kidney. Expressed in the airways epithelium of both asthmatic and healthy patients. Expressed in the bronchial epithelium, especially in mucus-producing goblet cells. Expressed in normal turbinate mucosa and nasal polyp. Expressed in.

Its subcellular location is the secreted. The protein localises to the extracellular space. It is found in the cell membrane. Functionally, may be involved in mediating calcium-activated chloride conductance. May play critical roles in goblet cell metaplasia, mucus hypersecretion, cystic fibrosis and AHR. May be involved in the regulation of mucus production and/or secretion by goblet cells. Involved in the regulation of tissue inflammation in the innate immune response. May play a role as a tumor suppressor. Induces MUC5AC. The polypeptide is Calcium-activated chloride channel regulator 1 (CLCA1) (Homo sapiens (Human)).